Here is a 343-residue protein sequence, read N- to C-terminus: Ribosomal RNA small subunit methyltransferase C (343 aa).

The protein belongs to the methyltransferase superfamily. RsmC family. As to quaternary structure, monomer.

Its subcellular location is the cytoplasm. It catalyses the reaction guanosine(1207) in 16S rRNA + S-adenosyl-L-methionine = N(2)-methylguanosine(1207) in 16S rRNA + S-adenosyl-L-homocysteine + H(+). Functionally, specifically methylates the guanine in position 1207 of 16S rRNA in the 30S particle. This Pseudoalteromonas atlantica (strain T6c / ATCC BAA-1087) protein is Ribosomal RNA small subunit methyltransferase C.